The sequence spans 1489 residues: ZEB2-regulated ABC transporter 1 (1489 aa).

The interval 1–55 (MALPEANMSSTRSEQSSRSHDTIVGNEQPHSEKPAASAPGDQMSSDDEDEGPQTE) is disordered. Residue Asn7 is glycosylated (N-linked (GlcNAc...) asparagine). Residues 44–53 (SSDDEDEGPQ) are compositionally biased toward acidic residues. 5 N-linked (GlcNAc...) asparagine glycosylation sites follow: Asn70, Asn73, Asn118, Asn332, and Asn469. Positions 152-408 (LGLPDMVHQM…FINLGFECPD (257 aa)) constitute an ABC transporter 1 domain. The next 5 membrane-spanning stretches (helical) occupy residues 513–533 (LLGS…VAFI), 552–572 (GATL…EILT), 599–619 (ILVD…TLYF), 628–648 (GAFF…SGVF), and 662–682 (MVPA…VVPV). Asn714 carries N-linked (GlcNAc...) asparagine glycosylation. Residues 773–793 (GILIAMTIFNHVVYIVATEFI) traverse the membrane as a helical segment. The tract at residues 811–834 (PSKAKSDPEASSSRPIPTTEKNNN) is disordered. The segment covering 819 to 834 (EASSSRPIPTTEKNNN) has biased composition (polar residues). Residues 846–1088 (FHWNDVCYDI…TLTNYFVKHG (243 aa)) enclose the ABC transporter 2 domain. Residue 882-889 (GVSGAGKT) participates in ATP binding. The next 5 membrane-spanning stretches (helical) occupy residues 1190–1210 (ALCI…PLSL), 1218–1238 (FAIF…MPHF), 1269–1289 (IPWN…PVGF), 1307–1327 (WLLI…AIAI), and 1333–1353 (AGGN…GVLA). Residue Asn1402 is glycosylated (N-linked (GlcNAc...) asparagine). A helical transmembrane segment spans residues 1457 to 1477 (GIGMVYIVVNIVGALFLYWLI).

This sequence belongs to the ABC transporter superfamily. ABCG family. PDR (TC 3.A.1.205) subfamily.

Its subcellular location is the cell membrane. The protein resides in the vacuole membrane. In terms of biological role, ABC transporter involved in zearalenone production. In Gibberella zeae (strain ATCC MYA-4620 / CBS 123657 / FGSC 9075 / NRRL 31084 / PH-1) (Wheat head blight fungus), this protein is ZEB2-regulated ABC transporter 1.